A 379-amino-acid chain; its full sequence is Putative acetyl-CoA C-acetyltransferase VraB (379 aa).

Cysteine 86 acts as the Acyl-thioester intermediate in catalysis. Histidine 338 acts as the Proton acceptor in catalysis.

The protein belongs to the thiolase-like superfamily. Thiolase family.

The protein is Putative acetyl-CoA C-acetyltransferase VraB (vraB) of Staphylococcus aureus (strain COL).